The following is a 199-amino-acid chain: ATP-dependent Clp protease proteolytic subunit (199 aa).

Serine 102 functions as the Nucleophile in the catalytic mechanism. The active site involves histidine 127.

Belongs to the peptidase S14 family. As to quaternary structure, fourteen ClpP subunits assemble into 2 heptameric rings which stack back to back to give a disk-like structure with a central cavity, resembling the structure of eukaryotic proteasomes.

It localises to the cytoplasm. It catalyses the reaction Hydrolysis of proteins to small peptides in the presence of ATP and magnesium. alpha-casein is the usual test substrate. In the absence of ATP, only oligopeptides shorter than five residues are hydrolyzed (such as succinyl-Leu-Tyr-|-NHMec, and Leu-Tyr-Leu-|-Tyr-Trp, in which cleavage of the -Tyr-|-Leu- and -Tyr-|-Trp bonds also occurs).. Its function is as follows. Cleaves peptides in various proteins in a process that requires ATP hydrolysis. Has a chymotrypsin-like activity. Plays a major role in the degradation of misfolded proteins. The protein is ATP-dependent Clp protease proteolytic subunit of Pseudothermotoga lettingae (strain ATCC BAA-301 / DSM 14385 / NBRC 107922 / TMO) (Thermotoga lettingae).